The sequence spans 222 residues: Iron-sulfur cluster repair protein YtfE (222 aa).

This sequence belongs to the RIC family. YtfE subfamily. As to quaternary structure, homodimer.

The protein resides in the cytoplasm. Di-iron-containing protein involved in the repair of iron-sulfur clusters damaged by oxidative and nitrosative stress conditions. This Musicola paradisiaca (strain Ech703) (Dickeya paradisiaca) protein is Iron-sulfur cluster repair protein YtfE.